The chain runs to 1151 residues: DNA repair protein RAD5 (1151 aa).

2 disordered regions span residues 35–54 and 142–161; these read QVDA…IAQG and KRED…RANS. Over residues 39 to 49 the composition is skewed to acidic residues; that stretch reads IQEENANDPEE. Polar residues predominate over residues 148–161; sequence MQSSQSKKPQRANS. Residues 500–711 enclose the Helicase ATP-binding domain; it reads PTMNSFKNGG…YSLVKFLKLE (212 aa). 513–520 serves as a coordination point for ATP; it reads DEMGLGKT. A DEGH box motif is present at residues 662–665; the sequence is DEGH. Residues 897 to 944 form an RING-type zinc finger; the sequence is CSICTAEPIESSSAVVTECEHVFCKECLEEYGNFQKEKSLQQKCPNCR. The Helicase C-terminal domain occupies 979-1146; the sequence is ALIRHLQQLQ…RRKRRIEEIQ (168 aa).

Belongs to the SNF2/RAD54 helicase family.

The protein localises to the cytoplasm. The protein resides in the nucleus. Its function is as follows. Probable helicase, member of the UBC2/RAD6 epistasis group. Functions with DNA repair protein RAD18 in error-free postreplication DNA repair. Involved in the maintenance of wild-type rates of instability of simple repetitive sequences such as poly(GT) repeats. Seems to be involved in maintaining a balance which acts in favor of error-prone non-homologous joining during DNA double-strand breaks repairs. The chain is DNA repair protein RAD5 (RAD5) from Candida glabrata (strain ATCC 2001 / BCRC 20586 / JCM 3761 / NBRC 0622 / NRRL Y-65 / CBS 138) (Yeast).